We begin with the raw amino-acid sequence, 150 residues long: Large ribosomal subunit protein bL9 (150 aa).

Belongs to the bacterial ribosomal protein bL9 family.

Functionally, binds to the 23S rRNA. The protein is Large ribosomal subunit protein bL9 of Streptococcus pyogenes serotype M6 (strain ATCC BAA-946 / MGAS10394).